Reading from the N-terminus, the 43-residue chain is Potassium channel toxin gamma-KTx 4.6 (43 aa).

Cystine bridges form between cysteine 5/cysteine 23, cysteine 11/cysteine 34, cysteine 20/cysteine 39, and cysteine 24/cysteine 41.

Belongs to the ergtoxin family. Gamma-KTx 4 subfamily. In terms of tissue distribution, expressed by the venom gland.

Its subcellular location is the secreted. Its function is as follows. Reversibly blocks Kv11/ERG potassium channels. This is Potassium channel toxin gamma-KTx 4.6 from Centruroides limpidus (Mexican scorpion).